A 212-amino-acid polypeptide reads, in one-letter code: Thymidylate kinase (212 aa).

An ATP-binding site is contributed by 11–18 (GMEGAGKS).

The protein belongs to the thymidylate kinase family.

It carries out the reaction dTMP + ATP = dTDP + ADP. Phosphorylation of dTMP to form dTDP in both de novo and salvage pathways of dTTP synthesis. The protein is Thymidylate kinase of Colwellia psychrerythraea (strain 34H / ATCC BAA-681) (Vibrio psychroerythus).